The following is a 239-amino-acid chain: Leucine-rich repeat-containing protein 57 (239 aa).

Residue glycine 2 is the site of N-myristoyl glycine attachment. 8 LRR repeats span residues 39 to 60, 63 to 84, 86 to 107, 109 to 131, 132 to 153, 154 to 175, 177 to 197, and 202 to 222; these read NLRTIDLSNNKIESLPPLLIGK, LLKSLSLNNNKLTVLPDEICNL, KLETLSLNNNHLRELPSTFGQL, ALKTLSLSGNQLGALPPQLCSLR, HLDVMDLSKNQIRSIPDSVGEL, QVIELNLNQNQISQISVKISCC, RLKILRLEENCLELSMLPQSI, and QICLLAVEGNLFEIKKLRELE.

The protein localises to the membrane. The sequence is that of Leucine-rich repeat-containing protein 57 (LRRC57) from Homo sapiens (Human).